A 1939-amino-acid chain; its full sequence is Myosin-6 (1939 aa).

The Myosin N-terminal SH3-like domain occupies 32 to 81 (DIRTECFVPDDKEEFVKAKILSREGGKVIAETENGKTVTVKEDQVLQQNP). In terms of domain architecture, Myosin motor spans 85–780 (DKIEDMAMLT…LLGLLEEMRD (696 aa)). Position 129 is an N6,N6,N6-trimethyllysine (lysine 129). 178 to 185 (GESGAGKT) lines the ATP pocket. Residue threonine 379 is modified to Phosphothreonine. The residue at position 417 (serine 417) is a Phosphoserine. Actin-binding stretches follow at residues 657–679 (LNKL…IPNE) and 759–773 (KFGH…GLLG). The 30-residue stretch at 783-812 (LSRIITRMQAQARGQLMRIEFKKIVERRDA) folds into the IQ domain. The stretch at 842–1939 (LKSAETEKEM…GAKQKMHDEE (1098 aa)) forms a coiled coil. The residue at position 1139 (serine 1139) is a Phosphoserine. The residue at position 1261 (tyrosine 1261) is a Phosphotyrosine. Serine 1271 is subject to Phosphoserine. Phosphothreonine is present on residues threonine 1277 and threonine 1284. Position 1309 is a phosphoserine (serine 1309). Tyrosine 1310 is modified (phosphotyrosine). Position 1311 is a phosphothreonine (threonine 1311). Serine 1512 carries the post-translational modification Phosphoserine. Threonine 1515 carries the phosphothreonine modification. 2 stretches are compositionally biased toward basic and acidic residues: residues 1826-1837 (GELEAEQKRNAE) and 1925-1939 (KSRD…HDEE). Disordered stretches follow at residues 1826-1849 (GELE…ERRI) and 1909-1939 (EERA…HDEE).

This sequence belongs to the TRAFAC class myosin-kinesin ATPase superfamily. Myosin family. Muscle myosin is a hexameric protein that consists of 2 heavy chain subunits (MHC), 2 alkali light chain subunits (MLC) and 2 regulatory light chain subunits (MLC-2).

It localises to the cytoplasm. The protein resides in the myofibril. Muscle contraction. The polypeptide is Myosin-6 (MYH6) (Homo sapiens (Human)).